Reading from the N-terminus, the 301-residue chain is NAD kinase (301 aa).

Residue Asp73 is the Proton acceptor of the active site. NAD(+) is bound by residues 73 to 74, 151 to 152, Arg179, Asp181, 192 to 197, Ala216, and Gln250; these read DG, ND, and TAYALS.

It belongs to the NAD kinase family. Requires a divalent metal cation as cofactor.

The protein localises to the cytoplasm. The enzyme catalyses NAD(+) + ATP = ADP + NADP(+) + H(+). In terms of biological role, involved in the regulation of the intracellular balance of NAD and NADP, and is a key enzyme in the biosynthesis of NADP. Catalyzes specifically the phosphorylation on 2'-hydroxyl of the adenosine moiety of NAD to yield NADP. The chain is NAD kinase from Methylibium petroleiphilum (strain ATCC BAA-1232 / LMG 22953 / PM1).